The following is a 62-amino-acid chain: Large ribosomal subunit protein bL28 (62 aa).

Belongs to the bacterial ribosomal protein bL28 family.

This Desulforamulus reducens (strain ATCC BAA-1160 / DSM 100696 / MI-1) (Desulfotomaculum reducens) protein is Large ribosomal subunit protein bL28.